We begin with the raw amino-acid sequence, 385 residues long: Putative type I restriction enzyme specificity subunit S.HindORF215P (385 aa).

It belongs to the type-I restriction system S methylase family.

Its function is as follows. A putative specificity subunit for a type I restriction enzyme; the corresponding endonuclease and methylase subunits have multiple frameshifts and are probably not expressed. This is Putative type I restriction enzyme specificity subunit S.HindORF215P from Haemophilus influenzae (strain ATCC 51907 / DSM 11121 / KW20 / Rd).